A 736-amino-acid chain; its full sequence is Transcription regulator protein BACH1 (736 aa).

The BTB domain occupies 34–100 (CDVTIFVEGQ…AYTAKLILSK (67 aa)). Phosphoserine is present on Ser-196. A compositionally biased stretch (basic and acidic residues) spans 286 to 295 (MEPEETKKDP). 2 disordered regions span residues 286–312 (MEPE…FPHN) and 349–389 (KPLS…RSSV). Phosphoserine occurs at positions 364 and 445. The region spanning 557–620 (CIHDIRRRSK…GETKQNLTGL (64 aa)) is the bZIP domain. The tract at residues 562–578 (RRRSKNRIAAQRCRKRK) is basic motif. Residues 582–589 (IQNLESEI) form a leucine-zipper region. The interval 680–719 (LPPCARGNSEPGYARGQESQQMSTATSEQAGPAEQCRQSG) is disordered. Residues 696 to 708 (QESQQMSTATSEQ) show a composition bias toward polar residues.

Belongs to the bZIP family. CNC subfamily. As to quaternary structure, heterodimer of BACH1 and MAFK. In terms of processing, ubiquitinated by the SCF(FBXL17) complex or by the by the SCF(FBXO22) complex, leading to its degradation by the proteasome. Under oxidative stress, reactive oxygen species covalently modify cysteine residues on the bZIP domain of BACH1 and release it from chromatin. If the BTB domain of BACH1 remains intact, its beta1-alpha6 degron is recognized by FBXO22, promoting its ubiquitination and degradation. If the structural integrity of the beta1-alpha6 degron is compromised, FBXL17 will transiently associate with the BACH1 BTB dimer and remodel it into stably bound monomer for ubiquitination and degradation.

The protein localises to the nucleus. Its function is as follows. Transcriptional regulator that acts as a repressor or activator, depending on the context. Binds to NF-E2 DNA binding sites. Plays important roles in coordinating transcription activation and repression by MAFK. Together with MAF, represses the transcription of genes under the control of the NFE2L2 oxidative stress pathway. The chain is Transcription regulator protein BACH1 from Homo sapiens (Human).